A 366-amino-acid chain; its full sequence is MSATRRTVASAGSIVVKIGSSALTSLVGGLDVGRLDALADAIEARMRAGSDVVVVSSGAVGAGLAPLGLTKRPRDLATKQAAASVGQLALAHAWGTSFARYGRTVGQVLLTADDIARRAQHRNAQRTLDRLRALHAVAIVNENDTVATAELRFGDNDRLAALVAHLVGADALVLLSDVDGLYDGDPRKGNATLIPEVNSPEDLDGVVAGSGGALGTGGMASKLSAARLAADAGVPVLLAAASDAGAALRDASVGTAFAARPSRLSARKFWVRHAADEQGILHIDEGAVRAVVTRRRSLLPAGITAVSGRFYGGDVVSLLGPEERPVARGVVAYDSAEISDILGKSTQELPAEMQRPVVHADDLVPL.

Lys17 lines the ATP pocket. 3 residues coordinate substrate: Ser57, Asp144, and Asn156. ATP-binding positions include Ser176–Asp177 and Thr216–Lys222. Residues Gln278 to Glu352 enclose the PUA domain.

This sequence belongs to the glutamate 5-kinase family.

It is found in the cytoplasm. The catalysed reaction is L-glutamate + ATP = L-glutamyl 5-phosphate + ADP. Its pathway is amino-acid biosynthesis; L-proline biosynthesis; L-glutamate 5-semialdehyde from L-glutamate: step 1/2. In terms of biological role, catalyzes the transfer of a phosphate group to glutamate to form L-glutamate 5-phosphate. In Rhodococcus opacus (strain B4), this protein is Glutamate 5-kinase.